A 517-amino-acid chain; its full sequence is Crotonobetaine/carnitine--CoA ligase (517 aa).

Belongs to the ATP-dependent AMP-binding enzyme family.

The catalysed reaction is 4-(trimethylamino)butanoate + ATP + CoA = 4-(trimethylamino)butanoyl-CoA + AMP + diphosphate. It catalyses the reaction crotonobetaine + ATP + CoA = crotonobetainyl-CoA + AMP + diphosphate. The enzyme catalyses (R)-carnitine + ATP + CoA = (R)-carnitinyl-CoA + AMP + diphosphate. The protein operates within amine and polyamine metabolism; carnitine metabolism. Functionally, catalyzes the transfer of CoA to carnitine, generating the initial carnitinyl-CoA needed for the CaiB reaction cycle. Also has activity toward crotonobetaine and gamma-butyrobetaine. In Escherichia coli O127:H6 (strain E2348/69 / EPEC), this protein is Crotonobetaine/carnitine--CoA ligase.